Reading from the N-terminus, the 320-residue chain is Lipoyl synthase (320 aa).

The tract at residues 9–31 (ANDARPRHPEKAHRPDQPIQRKP) is disordered. Positions 12 to 31 (ARPRHPEKAHRPDQPIQRKP) are enriched in basic and acidic residues. [4Fe-4S] cluster-binding residues include Cys-60, Cys-65, Cys-71, Cys-86, Cys-90, Cys-93, and Ser-299. One can recognise a Radical SAM core domain in the interval 72–288 (WEKKHATFMI…ETTAYAKGFL (217 aa)).

Belongs to the radical SAM superfamily. Lipoyl synthase family. [4Fe-4S] cluster is required as a cofactor.

The protein localises to the cytoplasm. The catalysed reaction is [[Fe-S] cluster scaffold protein carrying a second [4Fe-4S](2+) cluster] + N(6)-octanoyl-L-lysyl-[protein] + 2 oxidized [2Fe-2S]-[ferredoxin] + 2 S-adenosyl-L-methionine + 4 H(+) = [[Fe-S] cluster scaffold protein] + N(6)-[(R)-dihydrolipoyl]-L-lysyl-[protein] + 4 Fe(3+) + 2 hydrogen sulfide + 2 5'-deoxyadenosine + 2 L-methionine + 2 reduced [2Fe-2S]-[ferredoxin]. It functions in the pathway protein modification; protein lipoylation via endogenous pathway; protein N(6)-(lipoyl)lysine from octanoyl-[acyl-carrier-protein]: step 2/2. In terms of biological role, catalyzes the radical-mediated insertion of two sulfur atoms into the C-6 and C-8 positions of the octanoyl moiety bound to the lipoyl domains of lipoate-dependent enzymes, thereby converting the octanoylated domains into lipoylated derivatives. This chain is Lipoyl synthase, found in Methylobacterium nodulans (strain LMG 21967 / CNCM I-2342 / ORS 2060).